Consider the following 670-residue polypeptide: Solute carrier organic anion transporter family member 1A6 (670 aa).

The Cytoplasmic segment spans residues 1–20 (MGEPGKRVGIHRVRCFAKIK). Residues 21–40 (VFLLALIWAYISKILSGVYM) traverse the membrane as a helical segment. Topologically, residues 41–59 (STMLTQLERQFNISTSIVG) are extracellular. N-linked (GlcNAc...) asparagine glycosylation is present at Asn-52. Residues 60–80 (LINGSFEMGNLLVIVFVSYFG) traverse the membrane as a helical segment. The Cytoplasmic segment spans residues 81–86 (TKLHRP). The helical transmembrane segment at 87–111 (IMIGVGCAVMGLGCFIISLPHFLMG) threads the bilayer. The Extracellular portion of the chain corresponds to 112 to 155 (RYEYETTISPTSNLSSNSFLCVENRSQTLKPTQDPAECVKEIKS). Residues Asn-124 and Asn-135 are each glycosylated (N-linked (GlcNAc...) asparagine). Residues 156–184 (LMWIYVLVGNIIRGIGETPIMPLGISYIE) traverse the membrane as a helical segment. The Cytoplasmic portion of the chain corresponds to 185–203 (DFAKSENSPLYIGILEVGK). The helical transmembrane segment at 204–224 (MIGPILGYLMGPFCANIYVDT) threads the bilayer. Residues 225–242 (GSVNTDDLTITPTDTRWV) are Extracellular-facing. The helical transmembrane segment at 243–267 (GAWWIGFLVCAGVNVLTSIPFFFFP) threads the bilayer. Topologically, residues 268 to 311 (KTLPKEGLQDNGDGTENAKEEKHRDKAKEENQGIIKEFFLMMKN) are cytoplasmic. Residues 312-333 (LFCNPIYMLCVLTSVLQVNGVA) form a helical membrane-spanning segment. The Extracellular segment spans residues 334–353 (NIVIYKPKYLEHHFGISTAK). A helical membrane pass occupies residues 354 to 377 (AVFLIGLYTTPSVSAGYLISGFIM). Residues 378-381 (KKLK) lie on the Cytoplasmic side of the membrane. Residues 382–405 (ITLKKAAIIALCLFMSECLLSLCN) form a helical membrane-spanning segment. Topologically, residues 406–513 (FMLTCDTTPI…PDCANKLQYF (108 aa)) are extracellular. Positions 433–488 (NKFLSDCNTRCNCLTKTWDPVCGNNGLAYMSPCLAGCEKSVGTGANMVFQNCSCIR) constitute a Kazal-like domain. Cystine bridges form between Cys-439-Cys-469, Cys-445-Cys-465, and Cys-454-Cys-486. Asn-483 and Asn-492 each carry an N-linked (GlcNAc...) asparagine glycan. The helical transmembrane segment at 514–536 (LIITVFCCFFYSLATIPGYMVFL) threads the bilayer. Residues 537-545 (RCMKSEEKS) lie on the Cytoplasmic side of the membrane. A helical membrane pass occupies residues 546 to 571 (LGIGLQAFFMRLFAGIPAPIYFGALI). The Extracellular portion of the chain corresponds to 572–605 (DRTCLHWGTLKCGEPGACRTYEVSSFRRLYLGLP). The helical transmembrane segment at 606–623 (AALRGSIILPSFFILRLI) threads the bilayer. The Cytoplasmic segment spans residues 624–670 (RKLQIPGDTDSSEIELAETKPTEKESECTDMHKSSKVENDGELKTKL). Residue Thr-632 is modified to Phosphothreonine. Residues 633–670 (DSSEIELAETKPTEKESECTDMHKSSKVENDGELKTKL) are disordered. A phosphoserine mark is found at Ser-634 and Ser-635. Residues 640–670 (AETKPTEKESECTDMHKSSKVENDGELKTKL) show a composition bias toward basic and acidic residues.

It belongs to the organo anion transporter (TC 2.A.60) family. In terms of tissue distribution, kidney specific.

It is found in the cell membrane. Its function is as follows. May mediate the Na(+)-independent transport of organic anions. In Mus musculus (Mouse), this protein is Solute carrier organic anion transporter family member 1A6 (Slco1a6).